The chain runs to 429 residues: MLALLTVGVALAVAAGRAQDSPIPGSRFVCTALPPEAARAGCPLPAMPMQGGALSPEEELRAAVLQLRETVVQQKETLGAQREAIRELTGKLARCEGLAGGKARGTGKDTMGDLPRDPGHVVEQLSRSLQTLKDRLESLELQLRTNVSNAGLPSDFREVLQRRLGELERQLLRKVAELEDEKSLLHNETSAHRQKTESTLNALLQRVTELERGNSAFKSPDAFKVSLPLRTNYLYGKIKKTLPELYAFTICLWLRSSASPGIGTPFSYAVPGQANEIVLIEWGNNPIELLINDKVAQLPLFVSDGKWHHICITWTTRDGMWEAFQDGEKLGTGENLAPWHPIKPGGVLILGQEQDTVGGRFDATQAFVGELSQFNIWDRVLRAQEIINIANCSTNMPGNIIPWVDNNVDVFGGASKWPVETCEERLLDL.

The N-terminal stretch at 1–14 (MLALLTVGVALAVA) is a signal peptide. Residues asparagine 146 and asparagine 187 are each glycosylated (N-linked (GlcNAc...) asparagine). The 202-residue stretch at 221 to 422 (DAFKVSLPLR…GASKWPVETC (202 aa)) folds into the Pentraxin (PTX) domain. A disulfide bridge connects residues cysteine 251 and cysteine 311. Ca(2+)-binding residues include asparagine 275, glutamate 353, glutamine 354, aspartate 355, and glutamine 365. A glycan (N-linked (GlcNAc...) asparagine) is linked at asparagine 391.

As to quaternary structure, homooligomer or heterooligomer (probably pentamer) with neuronal pentraxin receptor (NPTXR). Ca(2+) serves as cofactor.

Its subcellular location is the secreted. Its function is as follows. Likely to play role in the modification of cellular properties that underlie long-term plasticity. Binds to agar matrix in a calcium-dependent manner. This chain is Neuronal pentraxin-2 (Nptx2), found in Mus musculus (Mouse).